A 92-amino-acid polypeptide reads, in one-letter code: Regakine-1 (92 aa).

An N-terminal signal peptide occupies residues Met-1–Ala-21. Intrachain disulfides connect Cys-32-Cys-56 and Cys-33-Cys-72.

The protein belongs to the intercrine beta (chemokine CC) family. In terms of tissue distribution, plasma serum.

It localises to the secreted. Its function is as follows. Chemotactic activity for neutrophils and lymphocytes. Binds to heparin. The polypeptide is Regakine-1 (Bos taurus (Bovine)).